We begin with the raw amino-acid sequence, 1487 residues long: Chromosome partition protein MukB (1487 aa).

Position 34–41 (34–41 (GGNGAGKS)) interacts with ATP. Coiled-coil stretches lie at residues 297 to 458 (GSRE…TNAL), 506 to 601 (RESQ…LEAI), 637 to 666 (LEQE…RLAS), 781 to 806 (RAAR…AKAA), 836 to 1109 (EQAL…ELRT), and 1210 to 1266 (VEAI…LSNI). The segment at 667–784 (PGGSNDPRLK…EIPLFGRAAR (118 aa)) is flexible hinge.

This sequence belongs to the SMC family. MukB subfamily. In terms of assembly, homodimerization via its hinge domain. Binds to DNA via its C-terminal region. Interacts, and probably forms a ternary complex, with MukE and MukF via its C-terminal region. The complex formation is stimulated by calcium or magnesium. Interacts with tubulin-related protein FtsZ.

It is found in the cytoplasm. The protein localises to the nucleoid. Its function is as follows. Plays a central role in chromosome condensation, segregation and cell cycle progression. Functions as a homodimer, which is essential for chromosome partition. Involved in negative DNA supercoiling in vivo, and by this means organize and compact chromosomes. May achieve or facilitate chromosome segregation by condensation DNA from both sides of a centrally located replisome during cell division. The polypeptide is Chromosome partition protein MukB (Vibrio parahaemolyticus serotype O3:K6 (strain RIMD 2210633)).